We begin with the raw amino-acid sequence, 364 residues long: Methylthioribose-1-phosphate isomerase (364 aa).

Aspartate 254 (proton donor) is an active-site residue.

This sequence belongs to the eIF-2B alpha/beta/delta subunits family. MtnA subfamily.

The protein localises to the cytoplasm. The protein resides in the nucleus. The catalysed reaction is 5-(methylsulfanyl)-alpha-D-ribose 1-phosphate = 5-(methylsulfanyl)-D-ribulose 1-phosphate. The protein operates within amino-acid biosynthesis; L-methionine biosynthesis via salvage pathway; L-methionine from S-methyl-5-thio-alpha-D-ribose 1-phosphate: step 1/6. Its function is as follows. Catalyzes the interconversion of methylthioribose-1-phosphate (MTR-1-P) into methylthioribulose-1-phosphate (MTRu-1-P). This Drosophila yakuba (Fruit fly) protein is Methylthioribose-1-phosphate isomerase.